The sequence spans 466 residues: Argininosuccinate lyase (466 aa).

The protein belongs to the lyase 1 family. Argininosuccinate lyase subfamily.

The protein resides in the cytoplasm. The catalysed reaction is 2-(N(omega)-L-arginino)succinate = fumarate + L-arginine. Its pathway is amino-acid biosynthesis; L-arginine biosynthesis; L-arginine from L-ornithine and carbamoyl phosphate: step 3/3. The polypeptide is Argininosuccinate lyase (Syntrophobacter fumaroxidans (strain DSM 10017 / MPOB)).